A 66-amino-acid chain; its full sequence is Large ribosomal subunit protein bL31 (66 aa).

Zn(2+) is bound by residues Cys-16, Cys-18, Cys-36, and Cys-39.

The protein belongs to the bacterial ribosomal protein bL31 family. Type A subfamily. As to quaternary structure, part of the 50S ribosomal subunit. The cofactor is Zn(2+).

In terms of biological role, binds the 23S rRNA. The sequence is that of Large ribosomal subunit protein bL31 from Bacillus licheniformis (strain ATCC 14580 / DSM 13 / JCM 2505 / CCUG 7422 / NBRC 12200 / NCIMB 9375 / NCTC 10341 / NRRL NRS-1264 / Gibson 46).